Consider the following 309-residue polypeptide: Prepilin leader peptidase/N-methyltransferase (309 aa).

A helical membrane pass occupies residues 35–55 (MQLAFAIVLGLVVGSFLNVVV). Zn(2+) is bound by residues C96, C99, C121, and C124. Helical transmembrane passes span 147-167 (LALFGPSGAALAAFGLCAALL), 183-203 (LTLPLLWAGLCVNLWGTFASL), 207-227 (VIGAIAGYLFLWCILWLFKLL), 230-250 (IEGIGYGDLKLLAALGAWLGW), 253-273 (LPQVVLIAAVAGAAVGLVATW), and 288-308 (FLAAGGAATLFFGTPFYLLLG).

The protein belongs to the peptidase A24 family. The cofactor is Zn(2+).

The protein localises to the cell inner membrane. The catalysed reaction is Typically cleaves a -Gly-|-Phe- bond to release an N-terminal, basic peptide of 5-8 residues from type IV prepilin, and then N-methylates the new N-terminal amino group, the methyl donor being S-adenosyl-L-methionine.. Its function is as follows. Plays an essential role in type IV pili and type II pseudopili formation by proteolytically removing the leader sequence from substrate proteins and subsequently monomethylating the alpha-amino group of the newly exposed N-terminal phenylalanine. The polypeptide is Prepilin leader peptidase/N-methyltransferase (gspO) (Burkholderia pseudomallei (strain 1026b)).